Here is a 190-residue protein sequence, read N- to C-terminus: Flavodoxin-like domain-containing protein BilS (190 aa).

It functions in the pathway porphyrin-containing compound metabolism; protoheme degradation. Together with BilR, catalyzes reduction of mesobilirubin and/or bilirubin to urobilinogen, a key step during heme degradation. BilS is probably involved in electron transfer for the bilirubin reductase BilR. This chain is Flavodoxin-like domain-containing protein BilS, found in Clostridium symbiosum (strain WAL-14163).